A 261-amino-acid chain; its full sequence is Small ribosomal subunit protein uS2 (261 aa).

The protein belongs to the universal ribosomal protein uS2 family.

This is Small ribosomal subunit protein uS2 from Enterococcus faecalis (strain ATCC 700802 / V583).